The chain runs to 255 residues: Acetyl-coenzyme A carboxylase carboxyl transferase subunit alpha (255 aa).

Residues methionine 1–arginine 235 form the CoA carboxyltransferase C-terminal domain.

It belongs to the AccA family. Acetyl-CoA carboxylase is a heterohexamer composed of biotin carboxyl carrier protein (AccB), biotin carboxylase (AccC) and two subunits each of ACCase subunit alpha (AccA) and ACCase subunit beta (AccD).

The protein localises to the cytoplasm. It carries out the reaction N(6)-carboxybiotinyl-L-lysyl-[protein] + acetyl-CoA = N(6)-biotinyl-L-lysyl-[protein] + malonyl-CoA. Its pathway is lipid metabolism; malonyl-CoA biosynthesis; malonyl-CoA from acetyl-CoA: step 1/1. Component of the acetyl coenzyme A carboxylase (ACC) complex. First, biotin carboxylase catalyzes the carboxylation of biotin on its carrier protein (BCCP) and then the CO(2) group is transferred by the carboxyltransferase to acetyl-CoA to form malonyl-CoA. The protein is Acetyl-coenzyme A carboxylase carboxyl transferase subunit alpha of Streptococcus pneumoniae serotype 2 (strain D39 / NCTC 7466).